Consider the following 243-residue polypeptide: Derlin-1.1 (243 aa).

Over 1 to 20 (MSSPAEYYKSLPPISKAYGT) the chain is Cytoplasmic. A helical transmembrane segment spans residues 21–41 (LCFFTTVLVQLQILHPLFLYL). The Lumenal segment spans residues 42–55 (DYPLVFKKFEIWRL). A helical membrane pass occupies residues 56–76 (LTSFFFLAPFSMKFGIRLLMI). Over 77–94 (ARYGVMLEKGAFDKRTAD) the chain is Cytoplasmic. Residues 95-115 (FLWMMIFGAISLLVLSIIPLF) form a helical membrane-spanning segment. The Lumenal segment spans residues 116–157 (NSFFLGIPMVSMLLYVWSRENPNAQINIYGLVQLRSFYLPWA). Residues 158–178 (MLLLDVIFGSSLMPGLLGIMV) form a helical membrane-spanning segment. Residues 179–243 (GHLYYFFAVL…FRGRSYRLNQ (65 aa)) lie on the Cytoplasmic side of the membrane. The tract at residues 219-243 (SPVRPPANGNSGSGVFRGRSYRLNQ) is disordered.

Belongs to the derlin family. As to expression, expressed in roots, stalks, leaves, immature ears, embryo and endosperm.

It is found in the endoplasmic reticulum membrane. May be involved in the degradation process of specific misfolded endoplasmic reticulum (ER) luminal proteins. The sequence is that of Derlin-1.1 (DER1.1) from Zea mays (Maize).